A 97-amino-acid polypeptide reads, in one-letter code: Citrate lyase acyl carrier protein 2 (97 aa).

O-(phosphoribosyl dephospho-coenzyme A)serine is present on Ser14.

It belongs to the CitD family. In terms of assembly, oligomer with a subunit composition of (alpha,beta,gamma)6.

Its subcellular location is the cytoplasm. Its function is as follows. Covalent carrier of the coenzyme of citrate lyase. This is Citrate lyase acyl carrier protein 2 from Salmonella paratyphi A (strain ATCC 9150 / SARB42).